A 90-amino-acid chain; its full sequence is Small ribosomal subunit protein bS20 (90 aa).

The disordered stretch occupies residues 1–28; sequence MPNTSSASKRLRQNEKRRLLNRATRSNM.

This sequence belongs to the bacterial ribosomal protein bS20 family.

Its function is as follows. Binds directly to 16S ribosomal RNA. This chain is Small ribosomal subunit protein bS20, found in Rhodopirellula baltica (strain DSM 10527 / NCIMB 13988 / SH1).